We begin with the raw amino-acid sequence, 669 residues long: MTESKFHAKYDKIQAEFKTNGTEYAKMTTKSSSGSKTSTSASKSSKSTGSSNASKSSTNAHGSNSSTSSTSSSSSKSGKGNSGTSTTETITTPLLIDYKKFTPYKDAYQMSNNNFNLSINYGSGLLGYWAGILAIAIFANMIKKMFPSLTNNLSGSISNLFRKHLFLPATFRKKKAQEFSIGVYGFFDGLIPTRLETIIVVIFVVLTGLFSALHIHHVKDNPQYATKNAELGHLIADRTGILGTFLIPLLILFGGRNNFLQWLTGWDFATFIMYHRWISRVDVLLIIVHAITFSVSDKATGKYKNRMKRDFMIWGTVSTICGGFILFQAMLFFRRKCYEVFFLIHIVLVVFFVVGGYYHLESQGYGDFMWAAIAVWAFDRVVRLGRIFFFGARKATVSIKGDDTLKIEVPKPKYWKSVAGGHAFIHFLKPTLFLQSHPFTFTTTESNDKIVLYAKIKNGITSNIAKYLSPLPGNTATIRVLVEGPYGEPSSAGRNCKNVVFVAGGNGIPGIYSECVDLAKKSKNQSIKLIWIIRHWKSLSWFTEELEYLKKTNVQSTIYVTQPQDCSGLECFEHDVSFEKKSDEKDSVESSQYSLISNIKQGLSHVEFIEGRPDISTQVEQEVKQADGAIGFVTCGHPAMVDELRFAVTQNLNVSKHRVEYHEQLQTWA.

Positions 17-86 (FKTNGTEYAK…SGKGNSGTST (70 aa)) are disordered. N-linked (GlcNAc...) asparagine glycosylation is found at N20, N52, N64, and N116. Residues 28–86 (TTKSSSGSKTSTSASKSSKSTGSSNASKSSTNAHGSNSSTSSTSSSSSKSGKGNSGTST) are compositionally biased toward low complexity. A helical transmembrane segment spans residues 122–142 (GSGLLGYWAGILAIAIFANMI). N152 is a glycosylation site (N-linked (GlcNAc...) asparagine). 5 helical membrane-spanning segments follow: residues 198–218 (IIVV…IHHV), 234–254 (LIAD…ILFG), 281–301 (VDVL…KATG), 313–333 (IWGT…MLFF), and 340–360 (VFFL…YYHL). The region spanning 239 to 373 (TGILGTFLIP…GYGDFMWAAI (135 aa)) is the Ferric oxidoreductase domain. The region spanning 374–492 (AVWAFDRVVR…EGPYGEPSSA (119 aa)) is the FAD-binding FR-type domain. Residue 437 to 442 (HPFTFT) participates in FAD binding. The helical transmembrane segment at 499–519 (VVFVAGGNGIPGIYSECVDLA) threads the bilayer. 2 N-linked (GlcNAc...) asparagine glycosylation sites follow: N524 and N653.

Belongs to the ferric reductase (FRE) family. It depends on FAD as a cofactor.

It is found in the membrane. The enzyme catalyses 2 a Fe(II)-siderophore + NAD(+) + H(+) = 2 a Fe(III)-siderophore + NADH. This chain is Probable ferric reductase transmembrane component (CFL1), found in Candida albicans (Yeast).